Consider the following 83-residue polypeptide: U2-hexatoxin-Hi1a (83 aa).

A signal peptide spans 1-23 (MRNTTFLVLNVMLLVSVALFCAA). The propeptide occupies 24–45 (DPEMEKSSFAEILDTGNPEQER). 4 cysteine pairs are disulfide-bonded: C47–C63, C54–C68, C62–C78, and C70–C76.

This sequence belongs to the neurotoxin 07 (Beta/delta-agtx) family. Expressed by the venom gland.

The protein resides in the secreted. Inhibits sodium channels (Nav) of insects. This Hadronyche infensa (Fraser island funnel-web spider) protein is U2-hexatoxin-Hi1a.